Reading from the N-terminus, the 876-residue chain is MKKLKASEIRQKYLDFFVEKGHMVEPSAPLVPIDDDTLLWINSGVATLKKYFDGRETPKKPRIVNSQKAIRTNDIENVGFTARHHTFFEMLGNFSIGDYFKQEAIEFAWEFLTSDKWMGMEPDKLYVTIHPEDMEAYNIWHKDIGLEESRIIRIEGNFWDIGEGPSGPNTEIFYDRGEAYGQDDPAEEMYPGGENERYLEVWNLVFSEFNHNKDHSYTPLPNKNIDTGMGLERMASVSQNVRTNYETDLFMPIMNEIEKVSGKQYLVNNEQDVAFKVIADHIRTIAFAISDGALPANEGRGYVLRRLLRRAVRFSQTLGINEPFMYKLVDIVADIMEPYYPNVKEKADFIKRVIKSEEERFHETLEDGLAILNELIKKAKATTNEINGKDAFKLYDTYGFPIELTEEIAVQAGLKVDMTTFESEMQQQRDRARQARQNSQSMQVQSEVLKNITSASTFVGYDTATAQTTLTHLIYNGEEVSQVEAGETVYFMLTETPFYAVSGGQVADTGIVYNDNFEIAVSEVTKAPNGQNLHKGAVQFGQVNVGATVSAEVNQNDRRDIQKNHSATHLLHAALKSVLGDHVNQAGSLVEADRLRFDFSHFGPMTNDEIDQVERLVNEEIWKGIDVNIQEMDIASAKEMGAMALFGEKYGDVVRVVNMAPFSIELCGGIHVRNTSEIGLFKIVSESGTGAGVRRIEALTGKAAFLYLEDIQEKFNTMKSQMKVKSDDQVIDKLTQLQDEEKALLKQLEQRDKEITSLKMGNIEDQVEEINGYKVLVTEVDVPNAKAIRSTMDDFKSKLQDTIIILASNVDDKVSMVATVPKSLTNNVKAGDLIKQMAPIVSGKGGGRPDMAQGGGTQPENISKSLSFIKDYIKNL.

The Zn(2+) site is built by His-565, His-569, Cys-667, and His-671.

The protein belongs to the class-II aminoacyl-tRNA synthetase family. Requires Zn(2+) as cofactor.

It localises to the cytoplasm. The enzyme catalyses tRNA(Ala) + L-alanine + ATP = L-alanyl-tRNA(Ala) + AMP + diphosphate. Catalyzes the attachment of alanine to tRNA(Ala) in a two-step reaction: alanine is first activated by ATP to form Ala-AMP and then transferred to the acceptor end of tRNA(Ala). Also edits incorrectly charged Ser-tRNA(Ala) and Gly-tRNA(Ala) via its editing domain. The chain is Alanine--tRNA ligase from Staphylococcus aureus (strain bovine RF122 / ET3-1).